The primary structure comprises 141 residues: Auxin-responsive protein SAUR62 (141 aa).

It belongs to the ARG7 family. In terms of tissue distribution, expressed in stamen filaments and petals.

The protein resides in the cell membrane. Its function is as follows. May promote auxin-stimulated organ elongation, such as hypocotyls, stamen filaments and petals. This chain is Auxin-responsive protein SAUR62, found in Arabidopsis thaliana (Mouse-ear cress).